The sequence spans 267 residues: uncharacterized protein (267 aa).

Residues 72–267 (LTENNNNNNT…EEKKKKKKKK (196 aa)) form a disordered region. Low complexity predominate over residues 122-145 (DSVSSSTTTTIITNNKKINNNNNN). A compositionally biased stretch (basic and acidic residues) spans 159–175 (ENEKSVQKSKKEKESPK). Residues 194 to 218 (SESSSSSSSSSSSESSSSESESSSS) are compositionally biased toward low complexity.

This is an uncharacterized protein from Dictyostelium discoideum (Social amoeba).